A 339-amino-acid polypeptide reads, in one-letter code: Replication factor C subunit 5 (339 aa).

59–66 (GPPGTGKT) lines the ATP pocket.

The protein belongs to the activator 1 small subunits family. Subunit of the RFC complex, an heteropentameric complex consisting of a large subunit RFC1 and four small subunits RFC2, RFC3, RFC4 and RFC5; the RFC complex interacts with PCNA. Forms an heterotetrameric complex with RFC2, RFC3 and RFC4; this complex has ATPase activity but is not stimulated by PCNA. The heterotetramer of subunits RFC2, RFC3, RFC4 and RFC5 interacts with RAD17.

It localises to the nucleus. In terms of biological role, subunit of the replication factor C (RFC) complex which acts during elongation of primed DNA templates by DNA polymerases delta and epsilon, and is necessary for ATP-dependent loading of proliferating cell nuclear antigen (PCNA) onto primed DNA. This Mus musculus (Mouse) protein is Replication factor C subunit 5 (Rfc5).